We begin with the raw amino-acid sequence, 405 residues long: Secreted aspartic protease 8 (405 aa).

The first 23 residues, 1–23, serve as a signal peptide directing secretion; it reads MVSIITFTKNVLVTLAFALLAQG. The propeptide at 24-75 is activation peptide; that stretch reads LAIPEDIDKRAEKVVSLDFTVTRKPFNATAHGQHHQSQQQQQQQQQQPAQKR. Residues 52–78 are disordered; the sequence is TAHGQHHQSQQQQQQQQQQPAQKRGTV. Residues 58–70 are compositionally biased toward low complexity; the sequence is HQSQQQQQQQQQQ. Residues 89 to 392 form the Peptidase A1 domain; it reads YAATITVGSN…DLDGNTISLA (304 aa). The active site involves D107. 107 to 109 is a binding site for pepstatin A; that stretch reads DTG. C122 and C134 form a disulfide bridge. Pepstatin A is bound by residues 160-161 and 292-296; these read ED and DSGTT. D292 is an active-site residue. C327 and C358 are disulfide-bonded.

The protein belongs to the peptidase A1 family. Monomer.

It is found in the secreted. It catalyses the reaction Preferential cleavage at the carboxyl of hydrophobic amino acids, but fails to cleave 15-Leu-|-Tyr-16, 16-Tyr-|-Leu-17 and 24-Phe-|-Phe-25 of insulin B chain. Activates trypsinogen, and degrades keratin.. Functionally, secreted aspartic peptidases (SAPs) are a group of ten acidic hydrolases considered as key virulence factors. These enzymes supply the fungus with nutrient amino acids as well as are able to degrade the selected host's proteins involved in the immune defense. Moreover, acts toward human hemoglobin though limited proteolysis to generate a variety of antimicrobial hemocidins, enabling to compete with the other microorganisms of the same physiological niche using the microbicidal peptides generated from the host protein. Plays a key role in defense against host by cleaving histatin-5 (Hst 5), a peptide from human saliva that carries out fungicidal activity. The cleavage rate decreases in an order of SAP2 &gt; SAP9 &gt; SAP3 &gt; SAP7 &gt; SAP4 &gt; SAP1 &gt; SAP8. The hydrolysis of Hst 5 by SAP8 causes production of the DSHAKRHHGY, HHSHRGY and FHEKHHSHRGY peptides. This Candida albicans (strain SC5314 / ATCC MYA-2876) (Yeast) protein is Secreted aspartic protease 8.